The chain runs to 173 residues: Ribosome maturation factor RimM (173 aa).

The 80-residue stretch at 90–169 folds into the PRC barrel domain; the sequence is EDEYFWFDIL…RIDTKGAQDI (80 aa).

Belongs to the RimM family. Binds ribosomal protein uS19.

It is found in the cytoplasm. Its function is as follows. An accessory protein needed during the final step in the assembly of 30S ribosomal subunit, possibly for assembly of the head region. Essential for efficient processing of 16S rRNA. May be needed both before and after RbfA during the maturation of 16S rRNA. It has affinity for free ribosomal 30S subunits but not for 70S ribosomes. The polypeptide is Ribosome maturation factor RimM (Nitratiruptor sp. (strain SB155-2)).